The sequence spans 429 residues: L-cysteine:1D-myo-inositol 2-amino-2-deoxy-alpha-D-glucopyranoside ligase (429 aa).

Cys60 lines the Zn(2+) pocket. L-cysteinyl-5'-AMP contacts are provided by residues 60-63, Thr75, and 98-100; these read CGIT and NIT. Residues 62 to 72 carry the 'HIGH' region motif; that stretch reads ITPYDATHLGH. Residues 204–209 carry the 'ERGGDP' region motif; it reads ERGGDP. Trp244 serves as a coordination point for L-cysteinyl-5'-AMP. Zn(2+) is bound at residue Cys248. 266–268 serves as a coordination point for L-cysteinyl-5'-AMP; sequence GSD. Residue His273 coordinates Zn(2+). Residue Ile300 coordinates L-cysteinyl-5'-AMP. The short motif at 306-310 is the 'KMSKS' region element; sequence KMSKS.

It belongs to the class-I aminoacyl-tRNA synthetase family. MshC subfamily. Monomer. The cofactor is Zn(2+).

The enzyme catalyses 1D-myo-inositol 2-amino-2-deoxy-alpha-D-glucopyranoside + L-cysteine + ATP = 1D-myo-inositol 2-(L-cysteinylamino)-2-deoxy-alpha-D-glucopyranoside + AMP + diphosphate + H(+). Functionally, catalyzes the ATP-dependent condensation of GlcN-Ins and L-cysteine to form L-Cys-GlcN-Ins. This Mycolicibacterium vanbaalenii (strain DSM 7251 / JCM 13017 / BCRC 16820 / KCTC 9966 / NRRL B-24157 / PYR-1) (Mycobacterium vanbaalenii) protein is L-cysteine:1D-myo-inositol 2-amino-2-deoxy-alpha-D-glucopyranoside ligase.